A 119-amino-acid polypeptide reads, in one-letter code: Ribonuclease P protein component (119 aa).

This sequence belongs to the RnpA family. As to quaternary structure, consists of a catalytic RNA component (M1 or rnpB) and a protein subunit.

The catalysed reaction is Endonucleolytic cleavage of RNA, removing 5'-extranucleotides from tRNA precursor.. RNaseP catalyzes the removal of the 5'-leader sequence from pre-tRNA to produce the mature 5'-terminus. It can also cleave other RNA substrates such as 4.5S RNA. The protein component plays an auxiliary but essential role in vivo by binding to the 5'-leader sequence and broadening the substrate specificity of the ribozyme. This chain is Ribonuclease P protein component, found in Haemophilus influenzae (strain 86-028NP).